We begin with the raw amino-acid sequence, 155 residues long: Ribosomal RNA large subunit methyltransferase H (155 aa).

S-adenosyl-L-methionine-binding positions include Leu72, Gly103, and 122–127 (LSDLTL).

It belongs to the RNA methyltransferase RlmH family. In terms of assembly, homodimer.

It is found in the cytoplasm. It carries out the reaction pseudouridine(1915) in 23S rRNA + S-adenosyl-L-methionine = N(3)-methylpseudouridine(1915) in 23S rRNA + S-adenosyl-L-homocysteine + H(+). Specifically methylates the pseudouridine at position 1915 (m3Psi1915) in 23S rRNA. This is Ribosomal RNA large subunit methyltransferase H from Acidovorax ebreus (strain TPSY) (Diaphorobacter sp. (strain TPSY)).